The sequence spans 459 residues: tRNA modification GTPase MnmE (459 aa).

Residues R23, E88, and R127 each contribute to the (6S)-5-formyl-5,6,7,8-tetrahydrofolate site. The TrmE-type G domain maps to 223 to 381; sequence GLSVVIVGKP…IKNCIKELFF (159 aa). N233 serves as a coordination point for K(+). GTP is bound by residues 233–238, 252–258, and 277–280; these read NVGKSS, TDIPGTT, and DTAG. S237 contributes to the Mg(2+) binding site. Residues T252, I254, and T257 each contribute to the K(+) site. T258 contributes to the Mg(2+) binding site. K459 serves as a coordination point for (6S)-5-formyl-5,6,7,8-tetrahydrofolate.

Belongs to the TRAFAC class TrmE-Era-EngA-EngB-Septin-like GTPase superfamily. TrmE GTPase family. As to quaternary structure, homodimer. Heterotetramer of two MnmE and two MnmG subunits. K(+) serves as cofactor.

It localises to the cytoplasm. Exhibits a very high intrinsic GTPase hydrolysis rate. Involved in the addition of a carboxymethylaminomethyl (cmnm) group at the wobble position (U34) of certain tRNAs, forming tRNA-cmnm(5)s(2)U34. In Clostridium kluyveri (strain ATCC 8527 / DSM 555 / NBRC 12016 / NCIMB 10680 / K1), this protein is tRNA modification GTPase MnmE.